Consider the following 217-residue polypeptide: MAVVVKLSGRIFEDEELVLKYAEAIKSYGVKIAVVTGGGELARRYISAAKRGGASNTFQDLIGIYASRLNALLLISLLGDAYPKVPTNIEEFLEAWRSHRVVVAGGFQPGQSTATVAALVAEAAGASVLLNAANIDAVYSDDPRKNPKAERLPHLKYDEFERIVRSSSLPGGYELMDVWSISILRRNCITVYIFDGRRPEHIGAILRGENPGTKITC.

6-10 (KLSGR) contacts ATP. Glycine 38 is a binding site for UMP. The ATP site is built by glycine 39 and arginine 43. UMP is bound by residues aspartate 60 and 107–113 (FQPGQST). ATP-binding residues include asparagine 134, tyrosine 139, and aspartate 142.

Belongs to the UMP kinase family. In terms of assembly, homohexamer.

The protein resides in the cytoplasm. It carries out the reaction UMP + ATP = UDP + ADP. It participates in pyrimidine metabolism; CTP biosynthesis via de novo pathway; UDP from UMP (UMPK route): step 1/1. Inhibited by UTP. In terms of biological role, catalyzes the reversible phosphorylation of UMP to UDP. This Pyrobaculum neutrophilum (strain DSM 2338 / JCM 9278 / NBRC 100436 / V24Sta) (Thermoproteus neutrophilus) protein is Uridylate kinase.